We begin with the raw amino-acid sequence, 278 residues long: Indole-3-glycerol phosphate synthase (278 aa).

Belongs to the TrpC family.

The enzyme catalyses 1-(2-carboxyphenylamino)-1-deoxy-D-ribulose 5-phosphate + H(+) = (1S,2R)-1-C-(indol-3-yl)glycerol 3-phosphate + CO2 + H2O. The protein operates within amino-acid biosynthesis; L-tryptophan biosynthesis; L-tryptophan from chorismate: step 4/5. This Pseudomonas paraeruginosa (strain DSM 24068 / PA7) (Pseudomonas aeruginosa (strain PA7)) protein is Indole-3-glycerol phosphate synthase.